Consider the following 511-residue polypeptide: 2-isopropylmalate synthase (511 aa).

The 263-residue stretch at 5–267 folds into the Pyruvate carboxyltransferase domain; the sequence is LIVFDTTLRD…DTNVDISQIV (263 aa). The Mn(2+) site is built by D14, H202, H204, and N238. Positions 393–511 are regulatory domain; sequence KLSWLKVVSE…YPVERAYPQV (119 aa).

It belongs to the alpha-IPM synthase/homocitrate synthase family. LeuA type 1 subfamily. As to quaternary structure, homodimer. Mn(2+) is required as a cofactor.

It localises to the cytoplasm. It carries out the reaction 3-methyl-2-oxobutanoate + acetyl-CoA + H2O = (2S)-2-isopropylmalate + CoA + H(+). It participates in amino-acid biosynthesis; L-leucine biosynthesis; L-leucine from 3-methyl-2-oxobutanoate: step 1/4. In terms of biological role, catalyzes the condensation of the acetyl group of acetyl-CoA with 3-methyl-2-oxobutanoate (2-ketoisovalerate) to form 3-carboxy-3-hydroxy-4-methylpentanoate (2-isopropylmalate). The sequence is that of 2-isopropylmalate synthase from Nitrosococcus oceani (strain ATCC 19707 / BCRC 17464 / JCM 30415 / NCIMB 11848 / C-107).